The following is a 123-amino-acid chain: Large ribosomal subunit protein bL12 (123 aa).

The protein belongs to the bacterial ribosomal protein bL12 family. As to quaternary structure, homodimer. Part of the ribosomal stalk of the 50S ribosomal subunit. Forms a multimeric L10(L12)X complex, where L10 forms an elongated spine to which 2 to 4 L12 dimers bind in a sequential fashion. Binds GTP-bound translation factors.

Its function is as follows. Forms part of the ribosomal stalk which helps the ribosome interact with GTP-bound translation factors. Is thus essential for accurate translation. This Wigglesworthia glossinidia brevipalpis protein is Large ribosomal subunit protein bL12.